We begin with the raw amino-acid sequence, 321 residues long: Tyrosine recombinase XerC (321 aa).

In terms of domain architecture, Core-binding (CB) spans 16 to 107; sequence PSIAQEMTRW…GLRSFGRFLE (92 aa). The Tyr recombinase domain occupies 128-315; it reads SLPKPLPMAS…DSERLLEVYA (188 aa). Residues R173, K199, H267, R270, and H293 contribute to the active site. Y302 functions as the O-(3'-phospho-DNA)-tyrosine intermediate in the catalytic mechanism.

The protein belongs to the 'phage' integrase family. XerC subfamily. As to quaternary structure, forms a cyclic heterotetrameric complex composed of two molecules of XerC and two molecules of XerD.

The protein localises to the cytoplasm. In terms of biological role, site-specific tyrosine recombinase, which acts by catalyzing the cutting and rejoining of the recombining DNA molecules. The XerC-XerD complex is essential to convert dimers of the bacterial chromosome into monomers to permit their segregation at cell division. It also contributes to the segregational stability of plasmids. The polypeptide is Tyrosine recombinase XerC (Bradyrhizobium diazoefficiens (strain JCM 10833 / BCRC 13528 / IAM 13628 / NBRC 14792 / USDA 110)).